The primary structure comprises 689 residues: Glycine--tRNA ligase beta subunit (689 aa).

It belongs to the class-II aminoacyl-tRNA synthetase family. Tetramer of two alpha and two beta subunits.

It is found in the cytoplasm. It catalyses the reaction tRNA(Gly) + glycine + ATP = glycyl-tRNA(Gly) + AMP + diphosphate. The polypeptide is Glycine--tRNA ligase beta subunit (Shewanella pealeana (strain ATCC 700345 / ANG-SQ1)).